Consider the following 856-residue polypeptide: Glucans biosynthesis glucosyltransferase H (856 aa).

6 helical membrane-spanning segments follow: residues 144-164 (ILLV…KGIM), 198-218 (ILIM…TALM), 517-537 (VFLT…FLVL), 574-594 (LFST…ILIW), 608-628 (TLSM…RMIF), and 691-711 (IVGS…VGLG).

Belongs to the glycosyltransferase 2 family. OpgH subfamily.

It localises to the cell inner membrane. The protein operates within glycan metabolism; osmoregulated periplasmic glucan (OPG) biosynthesis. Involved in the biosynthesis of osmoregulated periplasmic glucans (OPGs). The protein is Glucans biosynthesis glucosyltransferase H of Pseudomonas fluorescens (strain Pf0-1).